The following is a 288-amino-acid chain: CUF1-dependent copper transporter 1 (288 aa).

Residue N18 is glycosylated (N-linked (GlcNAc...) asparagine). The chain crosses the membrane as a helical span at residues 42–62 (MPSSAGATVGVCIGLFILAIF). 2 disordered regions span residues 106–125 (PVLF…YNPL) and 154–180 (RESQ…GSGV). Residues 158–167 (EGSSAPSYAH) are compositionally biased toward polar residues. A compositionally biased stretch (low complexity) spans 168–177 (SQQGQAQAQG). The chain crosses the membrane as a helical span at residues 251 to 271 (LLMLVVMTFNIWWMISVVIGC).

Belongs to the copper transporter (Ctr) (TC 1.A.56) family. SLC31A subfamily. In terms of assembly, interacts with the copper acquisition factor BIM1.

It localises to the cell membrane. High affinity copper transporter involved in Cu(+) import into the cell upon copper-limitating conditions. Functions with BIM1 and probably also FRE4 and FRE7, where FRE4 and FRE7 metalloreductases liberate the Cu(2+) bound to the BIM1 copper-binding site for subsequent import of Cu(+) into the cell by CTR1, via the reduction of BIM1-bound Cu(2+) to Cu(+) to reduce binding affinity for BIM1 but increase affinity for CTR1. The BIM1-CTR1 pathway for copper uptake plays a key role in colonization in the brain where copper amounts are low and thus in cryptococcal meningitis. The chain is CUF1-dependent copper transporter 1 from Cryptococcus neoformans var. grubii serotype A (strain H99 / ATCC 208821 / CBS 10515 / FGSC 9487) (Filobasidiella neoformans var. grubii).